The chain runs to 205 residues: Putative lipoprotein LppC (205 aa).

The N-terminal stretch at 1–27 is a signal peptide; sequence MESPMTSTLHRTPLATAGLALVVALGG. Cysteine 28 is lipidated: N-palmitoyl cysteine. Cysteine 28 carries S-diacylglycerol cysteine lipidation. The interval 126 to 145 is disordered; sequence GSTADGQTPAGGHSVPNSGG.

The protein belongs to the UPF0098 family.

The protein localises to the cell membrane. This Mycobacterium tuberculosis (strain CDC 1551 / Oshkosh) protein is Putative lipoprotein LppC (lppC).